Consider the following 153-residue polypeptide: Transcriptional repressor NrdR 3 (153 aa).

The segment at 1-26 is disordered; sequence MRCPFCGHDDTQVKDSRPTEDNSAIR. A zinc finger lies at 3-34; sequence CPFCGHDDTQVKDSRPTEDNSAIRRRRSCPEC. Over residues 7 to 24 the composition is skewed to basic and acidic residues; it reads GHDDTQVKDSRPTEDNSA. The ATP-cone domain maps to 49–139; sequence LVVIKKDGGR…VYRNFREAKD (91 aa).

The protein belongs to the NrdR family. Requires Zn(2+) as cofactor.

Its function is as follows. Negatively regulates transcription of bacterial ribonucleotide reductase nrd genes and operons by binding to NrdR-boxes. The protein is Transcriptional repressor NrdR 3 of Paramagnetospirillum magneticum (strain ATCC 700264 / AMB-1) (Magnetospirillum magneticum).